A 722-amino-acid chain; its full sequence is Ribosomal RNA large subunit methyltransferase K/L (722 aa).

In terms of domain architecture, THUMP spans 43–154 (IGLRACLWSR…GNEGRVGIDL (112 aa)).

It belongs to the methyltransferase superfamily. RlmKL family.

The protein localises to the cytoplasm. It catalyses the reaction guanosine(2445) in 23S rRNA + S-adenosyl-L-methionine = N(2)-methylguanosine(2445) in 23S rRNA + S-adenosyl-L-homocysteine + H(+). It carries out the reaction guanosine(2069) in 23S rRNA + S-adenosyl-L-methionine = N(2)-methylguanosine(2069) in 23S rRNA + S-adenosyl-L-homocysteine + H(+). In terms of biological role, specifically methylates the guanine in position 2445 (m2G2445) and the guanine in position 2069 (m7G2069) of 23S rRNA. In Magnetococcus marinus (strain ATCC BAA-1437 / JCM 17883 / MC-1), this protein is Ribosomal RNA large subunit methyltransferase K/L.